We begin with the raw amino-acid sequence, 554 residues long: Methyl-coenzyme M reductase II subunit alpha (554 aa).

Gln-151 lines the coenzyme F430 pocket. Residues Arg-229, 260–261, and Arg-274 contribute to the coenzyme B site; that span reads KH. Residues Tyr-336 and Tyr-447 each coordinate coenzyme M.

Belongs to the methyl-coenzyme M reductase alpha subunit family. In terms of assembly, MCR is a hexamer of two alpha, two beta, and two gamma chains, forming a dimer of heterotrimers. Coenzyme F430 is required as a cofactor.

The enzyme catalyses coenzyme B + methyl-coenzyme M = methane + coenzyme M-coenzyme B heterodisulfide. Its pathway is one-carbon metabolism; methyl-coenzyme M reduction; methane from methyl-coenzyme M: step 1/1. Its function is as follows. Component of the methyl-coenzyme M reductase (MCR) I that catalyzes the reductive cleavage of methyl-coenzyme M (CoM-S-CH3 or 2-(methylthio)ethanesulfonate) using coenzyme B (CoB or 7-mercaptoheptanoylthreonine phosphate) as reductant which results in the production of methane and the mixed heterodisulfide of CoB and CoM (CoM-S-S-CoB). This is the final step in methanogenesis. The protein is Methyl-coenzyme M reductase II subunit alpha (mrtA) of Methanothermus fervidus (strain ATCC 43054 / DSM 2088 / JCM 10308 / V24 S).